The chain runs to 92 residues: Small ribosomal subunit protein uS19c (92 aa).

Belongs to the universal ribosomal protein uS19 family.

It is found in the plastid. Its subcellular location is the chloroplast. Its function is as follows. Protein S19 forms a complex with S13 that binds strongly to the 16S ribosomal RNA. In Phaseolus angularis (Azuki bean), this protein is Small ribosomal subunit protein uS19c.